The following is a 136-amino-acid chain: Small ribosomal subunit protein uS11c (136 aa).

The protein belongs to the universal ribosomal protein uS11 family. Part of the 30S ribosomal subunit.

It localises to the plastid. The protein resides in the chloroplast. This Helianthus annuus (Common sunflower) protein is Small ribosomal subunit protein uS11c.